A 250-amino-acid chain; its full sequence is Proteasome subunit alpha type-7-A (250 aa).

Lys-62 is covalently cross-linked (Glycyl lysine isopeptide (Lys-Gly) (interchain with G-Cter in ubiquitin)).

The protein belongs to the peptidase T1A family. Component of the 20S core complex of the 26S proteasome. The 26S proteasome is composed of a core protease (CP), known as the 20S proteasome, capped at one or both ends by the 19S regulatory particle (RP/PA700). The 20S proteasome core is composed of 28 subunits that are arranged in four stacked rings, resulting in a barrel-shaped structure. The two end rings are each formed by seven alpha subunits, and the two central rings are each formed by seven beta subunits. The catalytic chamber with the active sites is on the inside of the barrel. Interacts with KIN10 and KIN11 SnRK subunits, and with the SKP1A/ASK1 subunit of the SCF E3 ubiquitin ligase complex. Expressed in roots, leaves and flowers.

Its subcellular location is the cytoplasm. The protein resides in the nucleus. Its function is as follows. The proteasome is a multicatalytic proteinase complex which is characterized by its ability to cleave peptides with Arg, Phe, Tyr, Leu, and Glu adjacent to the leaving group at neutral or slightly basic pH. The proteasome has an ATP-dependent proteolytic activity. Mediates the association of the SCF(TIR1) E3 ubiquitin ligase complex with the proteasome. The sequence is that of Proteasome subunit alpha type-7-A (PAD1) from Arabidopsis thaliana (Mouse-ear cress).